The primary structure comprises 182 residues: Small ribosomal subunit protein uS9 (182 aa).

The protein belongs to the universal ribosomal protein uS9 family.

The polypeptide is Small ribosomal subunit protein uS9 (Corynebacterium glutamicum (strain R)).